The sequence spans 305 residues: Probable branched-chain-amino-acid aminotransferase (305 aa).

Lysine 156 bears the N6-(pyridoxal phosphate)lysine mark.

This sequence belongs to the class-IV pyridoxal-phosphate-dependent aminotransferase family. It depends on pyridoxal 5'-phosphate as a cofactor.

It carries out the reaction L-leucine + 2-oxoglutarate = 4-methyl-2-oxopentanoate + L-glutamate. It catalyses the reaction L-isoleucine + 2-oxoglutarate = (S)-3-methyl-2-oxopentanoate + L-glutamate. The enzyme catalyses L-valine + 2-oxoglutarate = 3-methyl-2-oxobutanoate + L-glutamate. It participates in amino-acid biosynthesis; L-isoleucine biosynthesis; L-isoleucine from 2-oxobutanoate: step 4/4. The protein operates within amino-acid biosynthesis; L-leucine biosynthesis; L-leucine from 3-methyl-2-oxobutanoate: step 4/4. It functions in the pathway amino-acid biosynthesis; L-valine biosynthesis; L-valine from pyruvate: step 4/4. Its function is as follows. Acts on leucine, isoleucine and valine. This Synechocystis sp. (strain ATCC 27184 / PCC 6803 / Kazusa) protein is Probable branched-chain-amino-acid aminotransferase (ilvE).